A 1013-amino-acid polypeptide reads, in one-letter code: AP-2 complex subunit alpha-2 (1013 aa).

HEAT repeat units lie at residues 254–289 (AMRA…VVKN), 354–391 (DIIK…VSNA), 393–430 (DIVE…DLSW), and 521–565 (TVST…CIDV). The disordered stretch occupies residues 652–676 (STDPESVARSLSHPNGTLSNIDPQT). Positions 663 to 675 (SHPNGTLSNIDPQ) are enriched in polar residues. The GAE domain occupies 742–841 (ALCLKDSGVL…LDFSYKFGTN (100 aa)). Residues 760–1013 (GIKAEWRGHH…DPGAMLAGLL (254 aa)) are required for AP180 binding.

The protein belongs to the adaptor complexes large subunit family. Adaptor protein complex 2 (AP-2) is a heterotetramer composed of two large adaptins (alpha-type and beta-type subunits), a medium adaptin (mu-type subunit) and a small adaptin (sigma-type subunit). Interacts with AP180.

Its subcellular location is the membrane. The protein localises to the coated pit. Functionally, subunit of the adaptor protein complex 2 (AP-2). Adaptor protein complexes function in protein transport via transport vesicles in different membrane traffic pathways. Adaptor protein complexes are vesicle coat components and appear to be involved in cargo selection and vesicle formation. AP-2 is involved in clathrin-dependent endocytosis in which cargo proteins are incorporated into vesicles surrounded by clathrin (clathrin-coated vesicles, CCVs) which are destined for fusion with the early endosome. The complex binds polyphosphoinositides. This Arabidopsis thaliana (Mouse-ear cress) protein is AP-2 complex subunit alpha-2 (ALPHAC-AD).